The sequence spans 906 residues: MRSSEDREDSELLPANRPRSPSRSSYDSDDSGLSVDSILEEQKYNAATNETLGLPQEMRYHDEEGGEAGSNEALHTKASSSRSRRLLWLVVLLCCGGWVVAFVLFITQGRADYRTATDELQSDNSGSFSDGTSSGKPLTLQQVLSGVFLPRGHAISWVAGPDGEDGLLIERGEDDEAGYLRINDIRQDGKVNRVLMQKPTVGVDGRTIKPSATRPSPDLKKVLIISNQEKNWRHSFTASYWIFDVETQTAEPLDPNNIDGRVQLALWSPKSDAIAFVRDNNLYLRKLSSERVVPITKDGGEQLFYGVPDWVYEEEVFSGNSVTWWSEDGSQIAFIRTNESAVPEFPVQYFLSRPSGKKPQPGLENYPEVREIKYPKAGAPNPFVNLQFYDVEQGEVFSVDTPDDFDDDDRLIIEVIWAAKGKVLVRTTNRESDILKVFLVDTESRESKLIRIQDISELDGGWVEPTQSVRFIPADPDKGRPFDGYLDTVVHEGYDHLAYFTPLDNPEPIMLTSGEWEVVDAPTAVDLTRGLVYFIATKEAPTERHLYRVRLDGSDLTPLTDTSQPGYYSVSFSDGAGYALLSYQGPSIPWQSIISTEGEKTTTLRIIEDNTDLSKLVAQYALPTENYQNITIDGFTLQVVERRPPHFNPARKYPVLFHLYGGPGSQTVDRRFNVDFQSYVAASLGYIVVTVDGRGTGFIGRAARCIIRGNIGHYEAIDQIATAKNWAQKPYVDESRMAIWGWSYGGFMTLKTLEQDAGETFQYGMAVAPVTDWRFYDSVYTERYMHTPQHNPTGYDNTSISDMAALHNNVRFLVIHGASDDNVHIQNTLTLIDKLDLASVQNYDVHFYPDSDHSIFFHNAHTMVYERLASWLVNAFNGEWHRTANPVPDESMLRRLAKRVWPGFAH.

Residues 1–11 show a composition bias toward acidic residues; the sequence is MRSSEDREDSE. Residues 1-33 are disordered; sequence MRSSEDREDSELLPANRPRSPSRSSYDSDDSGL. At 1-85 the chain is on the cytoplasmic side; that stretch reads MRSSEDREDS…TKASSSRSRR (85 aa). Residues 21 to 33 are compositionally biased toward low complexity; sequence PSRSSYDSDDSGL. The chain crosses the membrane as a helical; Signal-anchor for type II membrane protein span at residues 86 to 106; that stretch reads LLWLVVLLCCGGWVVAFVLFI. Over 107-906 the chain is Vacuolar; sequence TQGRADYRTA…AKRVWPGFAH (800 aa). 2 N-linked (GlcNAc...) asparagine glycosylation sites follow: N338 and N629. Residue S743 is the Charge relay system of the active site. N797 carries N-linked (GlcNAc...) asparagine glycosylation. Catalysis depends on charge relay system residues D820 and H853.

It belongs to the peptidase S9B family.

It is found in the vacuole membrane. It catalyses the reaction Release of an N-terminal dipeptide, Xaa-Yaa-|-Zaa-, from a polypeptide, preferentially when Yaa is Pro, provided Zaa is neither Pro nor hydroxyproline.. Type IV dipeptidyl-peptidase which removes N-terminal dipeptides sequentially from polypeptides having unsubstituted N-termini provided that the penultimate residue is proline. The sequence is that of Probable dipeptidyl-aminopeptidase B (dapB) from Emericella nidulans (strain FGSC A4 / ATCC 38163 / CBS 112.46 / NRRL 194 / M139) (Aspergillus nidulans).